The sequence spans 197 residues: Potassium-transporting ATPase KdpC subunit (197 aa).

Residues 7–27 (PALVSMGLFTVLLGLAYPLAV) traverse the membrane as a helical segment.

The protein belongs to the KdpC family. As to quaternary structure, the system is composed of three essential subunits: KdpA, KdpB and KdpC.

It is found in the cell inner membrane. Its function is as follows. Part of the high-affinity ATP-driven potassium transport (or Kdp) system, which catalyzes the hydrolysis of ATP coupled with the electrogenic transport of potassium into the cytoplasm. This subunit acts as a catalytic chaperone that increases the ATP-binding affinity of the ATP-hydrolyzing subunit KdpB by the formation of a transient KdpB/KdpC/ATP ternary complex. In Caulobacter vibrioides (strain ATCC 19089 / CIP 103742 / CB 15) (Caulobacter crescentus), this protein is Potassium-transporting ATPase KdpC subunit.